Here is a 495-residue protein sequence, read N- to C-terminus: Syntaphilin (495 aa).

Positions 1 to 74 (MAMSLQGSRR…HGIKPPTPEQ (74 aa)) are disordered. A compositionally biased stretch (low complexity) spans 7–49 (GSRRASAGSRRRTSPPVSVRDAYGTSSLSSSSNSGSCKGSDSS). Residues 79-161 (LQQKEVCIRH…VKNNLIDKDK (83 aa)) are a coiled coil. Positions 191 to 244 (VAKEEGTGESAGGSPARSLTRSSTYTKLSDPAVCGDRQPGDPSNTSAEDGADSG) are disordered. Phosphoserine occurs at positions 200 and 204. Positions 207–217 (RSLTRSSTYTK) are enriched in polar residues. Thr-214 carries the phosphothreonine modification. A Phosphoserine modification is found at Ser-219. Thr-235 carries the phosphothreonine modification. Residues 427–446 (YIVDLLAVVVPAVPTVAWLC) traverse the membrane as a helical segment.

In terms of assembly, binds to STX1A. Interacts with DNM1; this interaction inhibits the binding of DNM1 to AMPH and DNM1-receptor-mediated endocytosis.

Its subcellular location is the membrane. It is found in the synapse. The protein resides in the synaptosome. Functionally, inhibits SNARE complex formation by absorbing free STX1A. This is Syntaphilin from Mus musculus (Mouse).